Here is a 125-residue protein sequence, read N- to C-terminus: N-alpha-acetyltransferase 38, NatC auxiliary subunit (125 aa).

The interval 1–42 (MAGAGPTMLLREENGCCSRRQSSSSAGDSDGEQEDSPATRAR) is disordered. A2 carries the post-translational modification N-acetylalanine. Low complexity predominate over residues 18-28 (SRRQSSSSAGD). S22, S25, and S29 each carry phosphoserine. The region spanning 40-118 (RARQQLEALL…IVSIEVQRES (79 aa)) is the Sm domain.

The protein belongs to the snRNP Sm proteins family. In terms of assembly, component of the N-terminal acetyltransferase C (NatC) complex, which is composed of NAA35, NAA38 and NAA30.

It is found in the cytoplasm. It localises to the nucleus. Its function is as follows. Auxillary component of the N-terminal acetyltransferase C (NatC) complex which catalyzes acetylation of N-terminal methionine residues. N-terminal acetylation protects proteins from ubiquitination and degradation by the N-end rule pathway. This Mus musculus (Mouse) protein is N-alpha-acetyltransferase 38, NatC auxiliary subunit (Naa38).